The sequence spans 240 residues: MKVKKGGGGTGPGAEPVPGASNRSVEPTREPGAEAESGSESEPEPGPGPRLGPLQGKQPIGPEDVLGLQRITGDYLCSPEENIYKIDFVRFKIRDMDSGTVLFEIKKPPVSERLPINRRDLDPNAGRFVRYQFTPAFLRLRQVGATVEFTVGDKPVNNFRMIERHYFRNQLLKSFDFHFGFCIPSSKNTCEHIYDFPPLSEELISEMIRHPYETQSDSFYFVDDRLVMHNKADYSYSGTP.

The segment covering 1 to 12 has biased composition (gly residues); that stretch reads MKVKKGGGGTGP. Residues 1-62 are disordered; that stretch reads MKVKKGGGGT…PLQGKQPIGP (62 aa). Phosphoserine; by CK2 occurs at positions 37, 39, and 41. Tyrosine 131 lines the tetradecanoate pocket.

The protein belongs to the PDE6D/unc-119 family. In terms of assembly, interacts with CABP4; in the absence of calcium. May interact with GTP-bound ARL1. Interacts with ARL2 and ARL3 (GTP-bound forms); this promotes the release of myristoylated cargo proteins. Found in a complex with ARL3, RP2 and UNC119; RP2 induces hydrolysis of GTP ARL3 in the complex, leading to the release of UNC119. Interacts with NPHP3 (when myristoylated). Interacts with CYS1 (when myristoylated). Interacts with MACIR; interaction only takes place when UNC119 is not liganded with myristoylated proteins. Interacts with ARL1 and ARL3 GTP-bound forms. Interacts with ARL2. Interacts with ARL2. Interacts with LCK; this interaction plays a crucial role in activation of LCK. Interacts with FYN. Interacts with RAB11A; in a cell cycle-dependent manner. Interacts with LYN (via SH2 and SH3 domains); leading to LYN activation. Interacts with DNM1; leading to a decrease of DNM1 GTPase activity. Found in a complex with ABL1, ABL2, CRK and UNC119; leading to the inhibition of CRK phosphorylation by ABL kinases. Interacts with CD44. Interacts with KLHL18 (via kelch repeats). Interacts with PPP3CA, PPP3CB and PPP3CC. Interacts with USP48; this interaction promotes UNC119 stability. Phosphorylation suppresses its interaction with KLHL18 and down-regulates its KLHL18-mediated degradation. Phosphorylated more under light conditions than dark conditions. Dephosphorylated by calcineurin.

It is found in the cytoplasm. The protein resides in the cytoskeleton. It localises to the microtubule organizing center. The protein localises to the centrosome. Its subcellular location is the spindle. It is found in the spindle pole. Functionally, involved in synaptic functions in photoreceptor cells, the signal transduction in immune cells as a Src family kinase activator, endosome recycling, the uptake of bacteria and endocytosis, protein trafficking in sensory neurons and as lipid-binding chaperone with specificity for a diverse subset of myristoylated proteins. Specifically binds the myristoyl moiety of a subset of N-terminally myristoylated proteins and is required for their localization. Binds myristoylated GNAT1 and is required for G-protein localization and trafficking in sensory neurons. Probably plays a role in trafficking proteins in photoreceptor cells. Plays important roles in mediating Src family kinase signals for the completion of cytokinesis via RAB11A. In Rattus norvegicus (Rat), this protein is Protein unc-119 homolog A (Unc119).